Consider the following 148-residue polypeptide: 3-dehydroquinate dehydratase 2 (148 aa).

Tyr-24 (proton acceptor) is an active-site residue. The substrate site is built by Asn-75, His-81, and Asp-88. His-101 (proton donor) is an active-site residue. Substrate contacts are provided by residues Leu-102–Ser-103 and Arg-112.

This sequence belongs to the type-II 3-dehydroquinase family. Homododecamer.

The enzyme catalyses 3-dehydroquinate = 3-dehydroshikimate + H2O. The protein operates within metabolic intermediate biosynthesis; chorismate biosynthesis; chorismate from D-erythrose 4-phosphate and phosphoenolpyruvate: step 3/7. Its function is as follows. Catalyzes a trans-dehydration via an enolate intermediate. The chain is 3-dehydroquinate dehydratase 2 (aroQ2) from Pseudomonas aeruginosa (strain ATCC 15692 / DSM 22644 / CIP 104116 / JCM 14847 / LMG 12228 / 1C / PRS 101 / PAO1).